Here is a 252-residue protein sequence, read N- to C-terminus: 3-dehydroquinate dehydratase (252 aa).

3-dehydroquinate contacts are provided by residues Ser21, 46–48, and Arg82; that span reads EWR. The Proton donor/acceptor role is filled by His143. Lys170 functions as the Schiff-base intermediate with substrate in the catalytic mechanism. 3-dehydroquinate is bound by residues Arg213, Ser232, and Gln236.

The protein belongs to the type-I 3-dehydroquinase family. As to quaternary structure, homodimer.

It carries out the reaction 3-dehydroquinate = 3-dehydroshikimate + H2O. It participates in metabolic intermediate biosynthesis; chorismate biosynthesis; chorismate from D-erythrose 4-phosphate and phosphoenolpyruvate: step 3/7. Its function is as follows. Involved in the third step of the chorismate pathway, which leads to the biosynthesis of aromatic amino acids. Catalyzes the cis-dehydration of 3-dehydroquinate (DHQ) and introduces the first double bond of the aromatic ring to yield 3-dehydroshikimate. The sequence is that of 3-dehydroquinate dehydratase from Escherichia coli O17:K52:H18 (strain UMN026 / ExPEC).